We begin with the raw amino-acid sequence, 100 residues long: Large ribosomal subunit protein bL21 (100 aa).

The protein belongs to the bacterial ribosomal protein bL21 family. As to quaternary structure, part of the 50S ribosomal subunit. Contacts protein L20.

Its function is as follows. This protein binds to 23S rRNA in the presence of protein L20. The sequence is that of Large ribosomal subunit protein bL21 from Paramagnetospirillum magneticum (strain ATCC 700264 / AMB-1) (Magnetospirillum magneticum).